The sequence spans 1002 residues: Eukaryotic translation initiation factor 5B (1002 aa).

2 disordered regions span residues 1–172 (MAKK…GLAA) and 184–402 (EEQE…NKKD). The span at 13 to 23 (WDEEFEEDAAQ) shows a compositional bias: acidic residues. The segment covering 27 to 37 (ISATPTPNPES) has biased composition (polar residues). Over residues 47 to 57 (EASASAEGAEA) the composition is skewed to low complexity. 2 stretches are compositionally biased toward basic and acidic residues: residues 75 to 111 (KKVI…EQAA) and 120 to 154 (QKEK…ESDK). A compositionally biased stretch (low complexity) spans 155–172 (PSASAKKPAKKVPAGLAA). Composition is skewed to basic and acidic residues over residues 184 to 252 (EEQE…ERRR) and 267 to 276 (AKKDGEENKP). The segment covering 277-287 (KKVVYSKKKKR) has biased composition (basic residues). Residues 297 to 306 (IKSDSKKDSE) are compositionally biased toward basic and acidic residues. Composition is skewed to acidic residues over residues 307–342 (VVPD…EETQ) and 352–370 (DQNQ…EEEE). Residues 381–398 (STPAATPAATPTPSSASP) show a composition bias toward low complexity. The region spanning 403–621 (LRSPICCILG…LLELTQKRMS (219 aa)) is the tr-type G domain. A Phosphoserine modification is found at serine 405. Positions 412 to 419 (GHVDTGKT) are G1. Aspartate 415 is a K(+) binding site. Aspartate 415 contacts Na(+). Residues 415–420 (DTGKTK), glutamine 431, and 437–439 (GIT) contribute to the GTP site. A Mg(2+)-binding site is contributed by threonine 419. Glycine 437 contacts K(+). Glycine 437 is a binding site for Na(+). Residues 437 to 441 (GITQQ) form a G2 region. Threonine 439 contacts Mg(2+). A G3 region spans residues 476–479 (DTPG). GTP contacts are provided by residues 530-533 (NKID) and 599-600 (AV). Positions 530 to 533 (NKID) are G4. The tract at residues 598 to 600 (SAV) is G5.

It belongs to the TRAFAC class translation factor GTPase superfamily. Classic translation factor GTPase family. IF-2 subfamily. Requires Na(+) as cofactor. K(+) is required as a cofactor.

The protein resides in the cytoplasm. It carries out the reaction GTP + H2O = GDP + phosphate + H(+). Its function is as follows. Plays a role in translation initiation. Translational GTPase that catalyzes the joining of the 40S and 60S subunits to form the 80S initiation complex with the initiator methionine-tRNA in the P-site base paired to the start codon. GTP binding and hydrolysis induces conformational changes in the enzyme that renders it active for productive interactions with the ribosome. The release of the enzyme after formation of the initiation complex is a prerequisite to form elongation-competent ribosomes. Stimulates 20S pre-rRNA cleavage to mature 18S rRNA by PIN-domain endonuclease NOB1. The chain is Eukaryotic translation initiation factor 5B from Saccharomyces cerevisiae (strain ATCC 204508 / S288c) (Baker's yeast).